Consider the following 480-residue polypeptide: 11S globulin subunit beta (480 aa).

A signal peptide spans 1-21; it reads MARSSLFTFLCLAVFINGCLS. At glutamine 22 the chain carries Pyrrolidone carboxylic acid. Disulfide bonds link cysteine 48–cysteine 81 and cysteine 124–cysteine 303. Cupin type-1 domains are found at residues 51–251 and 309–458; these read ENLR…GLVR and QNIG…EEAQ. Mg(2+)-binding residues include lysine 408 and arginine 468.

It belongs to the 11S seed storage protein (globulins) family. Hexamer; each subunit is composed of an acidic and a basic chain derived from a single precursor and linked by a disulfide bond.

Its function is as follows. This is a seed storage protein. In Cucurbita maxima (Pumpkin), this protein is 11S globulin subunit beta.